The following is a 561-amino-acid chain: MCLYALILVFLAAFTAGGHPSSLPVVDTLQGKVLGKYVSLEGFTQPVAVFLGVPFAKPPLGSLRFAPPQPAEPWSFVKNTTSYPPMCSQDPVAGQIVNDLLTNWEENISLQFSEDCLYLNIYTPADLTKRDRLPVMVWIHGGGLVLGGASTYDGLALSTHENVVVVVIQYRLGIWGFFSTGDEHSRGNWGHLDQVAALHWVQDNIDNFGGDPGSVTIFGESAGGESVSVLVLSPLAKNLFHKAISESGVALTAGLVKKNTRPLAEKIAVVSGCKSTTSASMVHCLRQKTEEELLETTLKLNLFSLDLHGDSRQSYPFVPTVLDGVVLPKMPEEILAEKDFNTVPYIVGINKQEFGWILPTMMNYPPSDMKLDPMTATSLLKKSSFLLNLPEEAIPVAVEKYLRHTDDPDRNKDQLLELIGDVIFGVPSVIVSRGHRDAGARTYMYEFQYRPSFSSKMKPSTVVGDHGDEIYSVFGAPILRGGTSKEEINLSKMMMKFWANFARNGNPNGQGLPHWPEYDQKEGYLQIGATTQQAQKLKEKEVAFWSELLAMKPLHAGHTEL.

A signal peptide spans 1–18 (MCLYALILVFLAAFTAGG). 2 N-linked (GlcNAc...) asparagine glycosylation sites follow: asparagine 79 and asparagine 107. The cysteines at positions 87 and 116 are disulfide-linked. Residue serine 221 is the Acyl-ester intermediate of the active site. Cysteine 273 and cysteine 284 are disulfide-bonded. Active-site charge relay system residues include glutamate 353 and histidine 466. N-linked (GlcNAc...) asparagine glycosylation occurs at asparagine 489. Residues 558 to 561 (HTEL) carry the Prevents secretion from ER motif.

This sequence belongs to the type-B carboxylesterase/lipase family. In terms of tissue distribution, expressed in liver.

The protein localises to the endoplasmic reticulum lumen. It localises to the microsome membrane. It carries out the reaction a carboxylic ester + H2O = an alcohol + a carboxylate + H(+). The enzyme catalyses all-trans-retinyl hexadecanoate + H2O = all-trans-retinol + hexadecanoate + H(+). Involved in the detoxification of xenobiotics and in the activation of ester and amide prodrugs. Hydrolyzes retinyl esters. This is Carboxylesterase 1E (Ces1e) from Rattus norvegicus (Rat).